Consider the following 181-residue polypeptide: Probable nicotinate-nucleotide adenylyltransferase (181 aa).

The protein belongs to the NadD family.

The catalysed reaction is nicotinate beta-D-ribonucleotide + ATP + H(+) = deamido-NAD(+) + diphosphate. Its pathway is cofactor biosynthesis; NAD(+) biosynthesis; deamido-NAD(+) from nicotinate D-ribonucleotide: step 1/1. Catalyzes the reversible adenylation of nicotinate mononucleotide (NaMN) to nicotinic acid adenine dinucleotide (NaAD). This is Probable nicotinate-nucleotide adenylyltransferase from Campylobacter fetus subsp. fetus (strain 82-40).